Here is a 352-residue protein sequence, read N- to C-terminus: Molybdenum import ATP-binding protein ModC (352 aa).

The ABC transporter domain maps to 1–229; the sequence is MLELNFSQTL…SVMNPWLPKE (229 aa). Position 31-38 (31-38) interacts with ATP; the sequence is GVSGAGKT. The region spanning 289-352 is the Mop domain; the sequence is QTSIRNVLRA…AQIKSVSITA (64 aa).

Belongs to the ABC transporter superfamily. Molybdate importer (TC 3.A.1.8) family. The complex is composed of two ATP-binding proteins (ModC), two transmembrane proteins (ModB) and a solute-binding protein (ModA).

It is found in the cell inner membrane. It catalyses the reaction molybdate(out) + ATP + H2O = molybdate(in) + ADP + phosphate + H(+). Its function is as follows. Part of the ABC transporter complex ModABC involved in molybdenum import. Responsible for energy coupling to the transport system. The sequence is that of Molybdenum import ATP-binding protein ModC from Shigella flexneri.